The primary structure comprises 229 residues: Large ribosomal subunit protein uL1 (229 aa).

Belongs to the universal ribosomal protein uL1 family. Part of the 50S ribosomal subunit.

Its function is as follows. Binds directly to 23S rRNA. The L1 stalk is quite mobile in the ribosome, and is involved in E site tRNA release. In terms of biological role, protein L1 is also a translational repressor protein, it controls the translation of the L11 operon by binding to its mRNA. The protein is Large ribosomal subunit protein uL1 of Streptococcus agalactiae serotype Ia (strain ATCC 27591 / A909 / CDC SS700).